Consider the following 1285-residue polypeptide: Dermonecrotic toxin (1285 aa).

The helical transmembrane segment at 402 to 422 threads the bilayer; the sequence is MLVPAVGIPINFALSATALGL.

The protein resides in the cytoplasm. It localises to the secreted. Its subcellular location is the host membrane. Functionally, this is a dermonecrotic toxin. This osteolytic toxin, induces bone resorption. Potent mitogen. This toxin is associated with the severe progressive form of the atrophic rhinitis, a major respiratory disease in pigs. The chain is Dermonecrotic toxin (toxA) from Pasteurella multocida.